The following is a 370-amino-acid chain: Queuine tRNA-ribosyltransferase (370 aa).

D89 (proton acceptor) is an active-site residue. Substrate-binding positions include 89 to 93 (DSGGF), D143, Q185, and G212. The segment at 243-249 (GVGTPED) is RNA binding. D262 functions as the Nucleophile in the catalytic mechanism. The RNA binding; important for wobble base 34 recognition stretch occupies residues 267 to 271 (TRNAR). Residues C300, C302, C305, and H331 each contribute to the Zn(2+) site.

It belongs to the queuine tRNA-ribosyltransferase family. As to quaternary structure, homodimer. Within each dimer, one monomer is responsible for RNA recognition and catalysis, while the other monomer binds to the replacement base PreQ1. The cofactor is Zn(2+).

It carries out the reaction 7-aminomethyl-7-carbaguanine + guanosine(34) in tRNA = 7-aminomethyl-7-carbaguanosine(34) in tRNA + guanine. It functions in the pathway tRNA modification; tRNA-queuosine biosynthesis. Its function is as follows. Catalyzes the base-exchange of a guanine (G) residue with the queuine precursor 7-aminomethyl-7-deazaguanine (PreQ1) at position 34 (anticodon wobble position) in tRNAs with GU(N) anticodons (tRNA-Asp, -Asn, -His and -Tyr). Catalysis occurs through a double-displacement mechanism. The nucleophile active site attacks the C1' of nucleotide 34 to detach the guanine base from the RNA, forming a covalent enzyme-RNA intermediate. The proton acceptor active site deprotonates the incoming PreQ1, allowing a nucleophilic attack on the C1' of the ribose to form the product. After dissociation, two additional enzymatic reactions on the tRNA convert PreQ1 to queuine (Q), resulting in the hypermodified nucleoside queuosine (7-(((4,5-cis-dihydroxy-2-cyclopenten-1-yl)amino)methyl)-7-deazaguanosine). This Methylobacillus flagellatus (strain ATCC 51484 / DSM 6875 / VKM B-1610 / KT) protein is Queuine tRNA-ribosyltransferase.